The chain runs to 72 residues: C-hordein (72 aa).

Pro residues predominate over residues 1-36 (FPQPQEPFPQQPQQPFPLQPQQPFPQQPQQPFPQPQ). Residues 1-61 (FPQPQEPFPQ…QQPFPLQPHQ (61 aa)) form a disordered region. A compositionally biased stretch (low complexity) spans 37–50 (QPFRQQAELIIPQQ).

Developing endosperm.

In terms of biological role, sulfur-poor seed storage protein. This chain is C-hordein, found in Hordeum vulgare (Barley).